A 310-amino-acid polypeptide reads, in one-letter code: Putative dihydroorotate dehydrogenase A (fumarate) (310 aa).

Substrate-binding positions include K45, 69-73 (NSMGL), and N128. An FMN-binding site is contributed by 45–46 (KT). N128 provides a ligand contact to FMN. Residue C131 is the Nucleophile of the active site. Positions 165 and 193 each coordinate FMN. Residue 194-195 (NS) participates in substrate binding. Residues G220, 248–249 (GG), and 270–271 (GT) each bind FMN.

The protein belongs to the dihydroorotate dehydrogenase family. Type 1 subfamily. Homodimer. The cofactor is FMN.

It is found in the cytoplasm. It carries out the reaction (S)-dihydroorotate + fumarate = orotate + succinate. It functions in the pathway pyrimidine metabolism; UMP biosynthesis via de novo pathway. Its function is as follows. Catalyzes the conversion of dihydroorotate to orotate with fumarate as the electron acceptor. The protein is Putative dihydroorotate dehydrogenase A (fumarate) (pyrD) of Streptococcus agalactiae serotype Ia (strain ATCC 27591 / A909 / CDC SS700).